The chain runs to 242 residues: DNA repair protein RecO (242 aa).

Belongs to the RecO family.

Its function is as follows. Involved in DNA repair and RecF pathway recombination. This chain is DNA repair protein RecO, found in Wolbachia pipientis subsp. Culex pipiens (strain wPip).